A 160-amino-acid chain; its full sequence is S-protein homolog 13 (160 aa).

Positions 1-27 are cleaved as a signal peptide; it reads MGRDLGWCFFVATVLLAAVLLPAPTIA.

It belongs to the plant self-incompatibility (S1) protein family.

Its subcellular location is the secreted. In Arabidopsis thaliana (Mouse-ear cress), this protein is S-protein homolog 13.